Consider the following 120-residue polypeptide: Large ribosomal subunit protein eL18 (120 aa).

Belongs to the eukaryotic ribosomal protein eL18 family.

The protein is Large ribosomal subunit protein eL18 of Thermococcus onnurineus (strain NA1).